The following is a 989-amino-acid chain: Autotransporter adhesin/invasin TibA (989 aa).

Residues 1–54 form the signal peptide; that stretch reads MNKVYNTVWNESTGTWVVTSELTRKGGLRPRQIKRTVLAGLIAGLLMPSMPALA. O-alpha-linked (D-glycero-D-manno-heptose) serine glycans are attached at residues S74, S86, S93, S94, S97, S100, S112, S113, S116, S119, S124, S131, S132, and S135. Tandem repeats lie at residues 82–100, 101–119, 120–138, 139–157, 158–176, 177–195, 196–214, 215–233, 234–251, 252–270, 271–289, and 290–308. The tract at residues 82 to 308 is 12 X 19 AA approximate repeats; the sequence is TTINSGGKQY…QVEAGGSASK (227 aa). A compositionally biased stretch (polar residues) spans 110-123; the sequence is HVSSGGSATSSTIN. Positions 110–146 are disordered; it reads HVSSGGSATSSTINSGGHQHVSSGGSATNTTVNNGGR. Residues 124–135 show a composition bias toward low complexity; it reads SGGHQHVSSGGS. A compositionally biased stretch (polar residues) spans 136–146; the sequence is ATNTTVNNGGR. O-alpha-linked (D-glycero-D-manno-heptose) serine glycans are attached at residues S151, S154, S162, S170, S176, S181, S188, S189, S200, S226, S227, S230, S238, S248, S263, S264, S275, S294, S305, S313, and S322. Residues 623-686 are disordered; it reads WYLKADTPPP…GTSSSPVRRT (64 aa). Positions 629–638 are enriched in pro residues; the sequence is TPPPVTPPTN. Tandem repeats lie at residues 639 to 643, 644 to 648, 649 to 653, 654 to 658, 659 to 663, 664 to 668, 669 to 673, and 674 to 678. Residues 639 to 667 show a composition bias toward low complexity; sequence PDADNPDAGNPDAGNPDAGNPDAGNPDAG. The interval 639–678 is 8 X 5 AA repeats of P-[DG]-[AGT]-[DGA]-[NKT]; that stretch reads PDADNPDAGNPDAGNPDAGNPDAGNPDAGKPGTGKPDAGT. The region spanning 721-989 is the Autotransporter domain; the sequence is NTRAPGGVWG…TGGVGFRINF (269 aa).

In terms of assembly, homohexamer. Post-translationally, glycosylated by TibC. Glycosylation is required for adhesion to and invasion of host cells. Glycosylation is dispensable for bacterial autoaggregation and biofilm formation.

It is found in the cell outer membrane. Mediates both adhesion to and invasion of human intestine epithelial cells. Also mediates bacterial cell aggregation via intercellular TibA-TibA interaction. Enhances biofilm formation. The polypeptide is Autotransporter adhesin/invasin TibA (Escherichia coli O78:H11 (strain H10407 / ETEC)).